Consider the following 300-residue polypeptide: Solute carrier family 25 member 35 (300 aa).

3 Solcar repeats span residues 1 to 90 (MDFL…AESR), 100 to 193 (HSPV…IKDL), and 203 to 294 (QSWK…LRSF). 6 helical membrane passes run 38–58 (TYQR…KVDG), 59–79 (LAAL…MNGI), 91–119 (GYLH…GAYL), 169–190 (AVGG…FSSI), 205–225 (WKVA…AMTP), and 277–300 (LGPH…TYAK).

It belongs to the mitochondrial carrier (TC 2.A.29) family.

Its subcellular location is the mitochondrion inner membrane. It catalyses the reaction a dicarboxylate(in) + sulfate(out) = a dicarboxylate(out) + sulfate(in). Its function is as follows. Putative antiporter that exchanges dicarboxylates and sulfur oxoanions across the inner membrane of mitochondria. The sequence is that of Solute carrier family 25 member 35 (Slc25a35) from Mus musculus (Mouse).